Consider the following 131-residue polypeptide: MSWQAYVDDHLMCDIEGQHLTAAAIIGHDGSVWAQSATFPQFKPEEVAAIIKDFDEPGSLAPTGLHLGGTKYMVIQGEPGAVIRGKKGAGGITVKKTGQALIFGIYDEPLTPGQCNIIVERLGDYLLEQGQ.

Cysteines 13 and 115 form a disulfide. An Involved in PIP2 interaction motif is present at residues 81 to 97; it reads AVIRGKKGAGGITVKKT. T111 is subject to Phosphothreonine.

Belongs to the profilin family. Occurs in many kinds of cells as a complex with monomeric actin in a 1:1 ratio. In terms of processing, phosphorylated by MAP kinases.

The protein localises to the cytoplasm. It localises to the cytoskeleton. Functionally, binds to actin and affects the structure of the cytoskeleton. At high concentrations, profilin prevents the polymerization of actin, whereas it enhances it at low concentrations. The polypeptide is Profilin-4 (Olea europaea (Common olive)).